The following is a 445-amino-acid chain: MSTILESLPTGQKVGIAFSGGLDTSAALHWMKLKGAVPYAYTANLGQPDEDDYDAIPKRAIEYGAAGARLIDCRAQLVAEGIAALQSGAFHITTAGVTYFNTTPIGRAVTGTMLVAAMKEDGVNIWGDGSTYKGNDIERFYRYGLLVNPDLKIYKPWLDQTFIDELGGRAEMSEFMNQAGFAYKMSAEKAYSTDSNLLGATHEAKDLESLESGIKIVNPIMGVAFWRDDVKIAAEEVTVRFEAGQPVALNGVEFKDQVELLLEANRIGGRHGLGMSDQIENRIIEAKSRGIYEAPGLALLYIAYERLVTGIHNEDTIEQYRENGRRLGRLLYQGRWFDPQAIMLRETAQRWVARAITGEVKIELRRGNDYSILSTKSPNLTYQPERLSMEKVASTFSPRDRIGQLTMRNLDITDTRDKLRVYSQVGLLTPGETSALPQIKGDGDK.

ATP-binding positions include 17–25 and Ala-43; that span reads AFSGGLDTS. An L-citrulline-binding site is contributed by Tyr-99. Gly-129 and Thr-131 together coordinate ATP. Residues Thr-131, Asn-135, and Asp-136 each coordinate L-aspartate. Residue Asn-135 participates in L-citrulline binding. Residue Asp-136 participates in ATP binding. Residues Arg-139 and Ser-192 each coordinate L-citrulline. Asp-194 contributes to the ATP binding site. L-citrulline is bound by residues Thr-201, Glu-203, and Glu-280.

This sequence belongs to the argininosuccinate synthase family. Type 2 subfamily. In terms of assembly, homotetramer.

It localises to the cytoplasm. The catalysed reaction is L-citrulline + L-aspartate + ATP = 2-(N(omega)-L-arginino)succinate + AMP + diphosphate + H(+). The protein operates within amino-acid biosynthesis; L-arginine biosynthesis; L-arginine from L-ornithine and carbamoyl phosphate: step 2/3. The chain is Argininosuccinate synthase from Burkholderia cenocepacia (strain HI2424).